A 195-amino-acid chain; its full sequence is MATTISAVILAGGQAKRMAGLDKGLQLLQGKPLYQHCLQRLTNQVSSISINANRHQAIYQQSGVEVFGDELEDFQGPLSGILTALERANTDFVLFVPCDSPFLPLNLCEKLQSAVENSKSLLAYANDGEREHPAFSLLSTQLKLPLRVYLQSGHRQMLQFFRQHKAISVDFSLQKQAFVNMNTLQDIEKYQNIYA.

GTP-binding positions include 10–12, lysine 23, asparagine 51, aspartate 69, and aspartate 99; that span reads LAG. Aspartate 99 contacts Mg(2+).

Belongs to the MobA family. As to quaternary structure, monomer. Requires Mg(2+) as cofactor.

The protein resides in the cytoplasm. It catalyses the reaction Mo-molybdopterin + GTP + H(+) = Mo-molybdopterin guanine dinucleotide + diphosphate. Its function is as follows. Transfers a GMP moiety from GTP to Mo-molybdopterin (Mo-MPT) cofactor (Moco or molybdenum cofactor) to form Mo-molybdopterin guanine dinucleotide (Mo-MGD) cofactor. The protein is Molybdenum cofactor guanylyltransferase of Histophilus somni (strain 2336) (Haemophilus somnus).